The sequence spans 91 residues: Small ribosomal subunit protein bS18 (91 aa).

A disordered region spans residues methionine 1–arginine 21. Positions glycine 12–arginine 21 are enriched in basic residues.

This sequence belongs to the bacterial ribosomal protein bS18 family. In terms of assembly, part of the 30S ribosomal subunit. Forms a tight heterodimer with protein bS6.

Functionally, binds as a heterodimer with protein bS6 to the central domain of the 16S rRNA, where it helps stabilize the platform of the 30S subunit. This is Small ribosomal subunit protein bS18 from Geotalea daltonii (strain DSM 22248 / JCM 15807 / FRC-32) (Geobacter daltonii).